The sequence spans 210 residues: Imidazole glycerol phosphate synthase subunit HisH (210 aa).

Positions 1–210 (MIAILDYGMG…KLLENFIRFI (210 aa)) constitute a Glutamine amidotransferase type-1 domain. Cys-79 serves as the catalytic Nucleophile. Residues His-191 and Glu-193 contribute to the active site.

In terms of assembly, heterodimer of HisH and HisF.

The protein localises to the cytoplasm. It carries out the reaction 5-[(5-phospho-1-deoxy-D-ribulos-1-ylimino)methylamino]-1-(5-phospho-beta-D-ribosyl)imidazole-4-carboxamide + L-glutamine = D-erythro-1-(imidazol-4-yl)glycerol 3-phosphate + 5-amino-1-(5-phospho-beta-D-ribosyl)imidazole-4-carboxamide + L-glutamate + H(+). It catalyses the reaction L-glutamine + H2O = L-glutamate + NH4(+). Its pathway is amino-acid biosynthesis; L-histidine biosynthesis; L-histidine from 5-phospho-alpha-D-ribose 1-diphosphate: step 5/9. Functionally, IGPS catalyzes the conversion of PRFAR and glutamine to IGP, AICAR and glutamate. The HisH subunit catalyzes the hydrolysis of glutamine to glutamate and ammonia as part of the synthesis of IGP and AICAR. The resulting ammonia molecule is channeled to the active site of HisF. This is Imidazole glycerol phosphate synthase subunit HisH from Leptospira interrogans serogroup Icterohaemorrhagiae serovar copenhageni (strain Fiocruz L1-130).